Reading from the N-terminus, the 122-residue chain is Cupin 2 conserved barrel domain-containing protein (122 aa).

The interval 55-119 (PGGVTTAEDH…DSPVEIVSIW (65 aa)) is cupin 2 conserved barrel. Zn(2+)-binding residues include Asp63, His65, Glu69, and His103.

The cofactor is Zn(2+).

The enzyme catalyses N(6)-hydroxy-L-lysine + L-glutamate + ATP = 1-L-glutamo-2-N(6-)L-lysinohydrazine + AMP + diphosphate + 2 H(+). Its activity is regulated as follows. Inhibited by 1,10-phenanthroline (OP). In terms of biological role, catalyzes hydrazine (N-N) bond formation from an unstable ester intermediate, the product of the ATP-dependent condensation of L-N(6)-OH-lysine and L-glutamine substrates by a methionyl-tRNA synthase-like protein. In Rhodococcus jostii (strain RHA1), this protein is Cupin 2 conserved barrel domain-containing protein.